A 391-amino-acid polypeptide reads, in one-letter code: uncharacterized protein (391 aa).

This is an uncharacterized protein from Sinorhizobium fredii (strain NBRC 101917 / NGR234).